Consider the following 487-residue polypeptide: Probable peptidoglycan glycosyltransferase FtsW (487 aa).

9 helical membrane-spanning segments follow: residues 30 to 50, 71 to 91, 93 to 113, 122 to 142, 167 to 187, 203 to 223, 282 to 302, 332 to 352, and 358 to 378; these read VSLI…VTSA, IYIV…MQWW, TSNA…LLVG, WLAI…FFFC, VVFF…TVVV, LWQF…LIMF, FIMA…VLAL, IGIW…GILP, and FPLL…VGLL. Disordered stretches follow at residues 398–419 and 444–487; these read KAKA…SAGK and IDSI…DGYV. Residues 401–416 are compositionally biased toward polar residues; that stretch reads ASTSSSRKNKPKTASS. Residues 444–453 show a composition bias toward acidic residues; that stretch reads IDSIMDDFAQ.

Belongs to the SEDS family. FtsW subfamily.

Its subcellular location is the cell inner membrane. It carries out the reaction [GlcNAc-(1-&gt;4)-Mur2Ac(oyl-L-Ala-gamma-D-Glu-L-Lys-D-Ala-D-Ala)](n)-di-trans,octa-cis-undecaprenyl diphosphate + beta-D-GlcNAc-(1-&gt;4)-Mur2Ac(oyl-L-Ala-gamma-D-Glu-L-Lys-D-Ala-D-Ala)-di-trans,octa-cis-undecaprenyl diphosphate = [GlcNAc-(1-&gt;4)-Mur2Ac(oyl-L-Ala-gamma-D-Glu-L-Lys-D-Ala-D-Ala)](n+1)-di-trans,octa-cis-undecaprenyl diphosphate + di-trans,octa-cis-undecaprenyl diphosphate + H(+). It functions in the pathway cell wall biogenesis; peptidoglycan biosynthesis. Peptidoglycan polymerase that is essential for cell division. The chain is Probable peptidoglycan glycosyltransferase FtsW from Pseudoalteromonas atlantica (strain T6c / ATCC BAA-1087).